Here is a 97-residue protein sequence, read N- to C-terminus: Large ribosomal subunit protein uL23 (97 aa).

Belongs to the universal ribosomal protein uL23 family. In terms of assembly, part of the 50S ribosomal subunit. Contacts protein L29, and trigger factor when it is bound to the ribosome.

Its function is as follows. One of the early assembly proteins it binds 23S rRNA. One of the proteins that surrounds the polypeptide exit tunnel on the outside of the ribosome. Forms the main docking site for trigger factor binding to the ribosome. In Methylococcus capsulatus (strain ATCC 33009 / NCIMB 11132 / Bath), this protein is Large ribosomal subunit protein uL23.